The primary structure comprises 193 residues: dCTP deaminase (193 aa).

Residues 110 to 115, D128, 136 to 138, Y171, K178, and Q182 contribute to the dCTP site; these read RSSLAR and VLE. E138 functions as the Proton donor/acceptor in the catalytic mechanism.

It belongs to the dCTP deaminase family. As to quaternary structure, homotrimer.

It catalyses the reaction dCTP + H2O + H(+) = dUTP + NH4(+). Its pathway is pyrimidine metabolism; dUMP biosynthesis; dUMP from dCTP (dUTP route): step 1/2. Catalyzes the deamination of dCTP to dUTP. This chain is dCTP deaminase, found in Buchnera aphidicola subsp. Schizaphis graminum (strain Sg).